A 245-amino-acid polypeptide reads, in one-letter code: tRNA (guanine-N(1)-)-methyltransferase (245 aa).

S-adenosyl-L-methionine-binding positions include glycine 111 and 130-135 (IGDYVL).

It belongs to the RNA methyltransferase TrmD family. In terms of assembly, homodimer.

The protein localises to the cytoplasm. It catalyses the reaction guanosine(37) in tRNA + S-adenosyl-L-methionine = N(1)-methylguanosine(37) in tRNA + S-adenosyl-L-homocysteine + H(+). Functionally, specifically methylates guanosine-37 in various tRNAs. The chain is tRNA (guanine-N(1)-)-methyltransferase from Dictyoglomus turgidum (strain DSM 6724 / Z-1310).